Reading from the N-terminus, the 224-residue chain is TM2 domain-containing protein amaretto (224 aa).

The first 18 residues, 1–18, serve as a signal peptide directing secretion; that stretch reads MRIFYGLLAFLVARQHDA. The Extracellular portion of the chain corresponds to 19 to 154; the sequence is QAIQARSDKE…FLRAGVPCVR (136 aa). N-linked (GlcNAc...) asparagine glycosylation is found at asparagine 102 and asparagine 142. The chain crosses the membrane as a helical span at residues 155-175; the sequence is YTDHYFVTTLIYSMLLGFLGM. The TM2 domain occupies 157 to 205; it reads DHYFVTTLIYSMLLGFLGMDRFCLGQTGTAVGKLLTMGGVGVWWIIDVI. The Cytoplasmic portion of the chain corresponds to 176-189; it reads DRFCLGQTGTAVGK. Residues 190-210 traverse the membrane as a helical segment; the sequence is LLTMGGVGVWWIIDVILLITN. Over 211–224 the chain is Extracellular; that stretch reads NLLPEDGSNWNPYV.

It belongs to the TM2 family.

It is found in the membrane. Positive regulator of Notch signaling. Maternal neurogenic factor involved in Notch signaling-dependent neuroectodermal specification during early embryogenesis. Functions cooperatively with amx/TM2D3 and bisc/TM2D1. This is TM2 domain-containing protein amaretto from Drosophila melanogaster (Fruit fly).